The chain runs to 103 residues: NADH-quinone oxidoreductase subunit K (103 aa).

3 helical membrane-spanning segments follow: residues 6–26 (IEYY…GFLL), 30–50 (LLVL…TLVA), and 66–86 (FFVI…VLAF).

It belongs to the complex I subunit 4L family. NDH-1 is composed of 14 different subunits. Subunits NuoA, H, J, K, L, M, N constitute the membrane sector of the complex.

The protein resides in the cell inner membrane. It carries out the reaction a quinone + NADH + 5 H(+)(in) = a quinol + NAD(+) + 4 H(+)(out). In terms of biological role, NDH-1 shuttles electrons from NADH, via FMN and iron-sulfur (Fe-S) centers, to quinones in the respiratory chain. The immediate electron acceptor for the enzyme in this species is believed to be ubiquinone. Couples the redox reaction to proton translocation (for every two electrons transferred, four hydrogen ions are translocated across the cytoplasmic membrane), and thus conserves the redox energy in a proton gradient. This chain is NADH-quinone oxidoreductase subunit K, found in Sorangium cellulosum (strain So ce56) (Polyangium cellulosum (strain So ce56)).